Consider the following 418-residue polypeptide: UDP-N-acetylglucosamine 1-carboxyvinyltransferase (418 aa).

Phosphoenolpyruvate is bound at residue 22–23 (KN). Arg92 serves as a coordination point for UDP-N-acetyl-alpha-D-glucosamine. Residue Cys116 is the Proton donor of the active site. Cys116 bears the 2-(S-cysteinyl)pyruvic acid O-phosphothioketal mark. Residues 121–125 (RPIDL), Asp305, and Leu327 each bind UDP-N-acetyl-alpha-D-glucosamine.

The protein belongs to the EPSP synthase family. MurA subfamily.

It localises to the cytoplasm. The enzyme catalyses phosphoenolpyruvate + UDP-N-acetyl-alpha-D-glucosamine = UDP-N-acetyl-3-O-(1-carboxyvinyl)-alpha-D-glucosamine + phosphate. Its pathway is cell wall biogenesis; peptidoglycan biosynthesis. In terms of biological role, cell wall formation. Adds enolpyruvyl to UDP-N-acetylglucosamine. This chain is UDP-N-acetylglucosamine 1-carboxyvinyltransferase, found in Campylobacter jejuni (strain RM1221).